Consider the following 273-residue polypeptide: MENRKNYFHLHLISDSTGETLIAAGRAAAAQFQSSHALEHVYPLIRNRKQLMQVMDAVDGAPGIVLYTIVDRELAGLIDQRCREIGVPCVSVLDPIIELFQSYLGSPSRRRSGAQHVMDAEYFARIEALNFTMDHDDGQVPSDFNEADVVLVGVSRTSKTPTSIYLANRGIKTANIPIVPGVPLPDALLKATKPLIVGLIASAERLSQVRQHRVLGTTQSFHGEDYTDRAAIAEELKYARSLCARNNWPLIDVTRRSIEETAAAIVALRPRLR.

Position 153-160 (153-160 (GVSRTSKT)) interacts with ADP.

It belongs to the pyruvate, phosphate/water dikinase regulatory protein family. PDRP subfamily.

It carries out the reaction N(tele)-phospho-L-histidyl/L-threonyl-[pyruvate, phosphate dikinase] + ADP = N(tele)-phospho-L-histidyl/O-phospho-L-threonyl-[pyruvate, phosphate dikinase] + AMP + H(+). The enzyme catalyses N(tele)-phospho-L-histidyl/O-phospho-L-threonyl-[pyruvate, phosphate dikinase] + phosphate + H(+) = N(tele)-phospho-L-histidyl/L-threonyl-[pyruvate, phosphate dikinase] + diphosphate. In terms of biological role, bifunctional serine/threonine kinase and phosphorylase involved in the regulation of the pyruvate, phosphate dikinase (PPDK) by catalyzing its phosphorylation/dephosphorylation. In Rhizobium meliloti (strain 1021) (Ensifer meliloti), this protein is Putative pyruvate, phosphate dikinase regulatory protein.